Here is a 943-residue protein sequence, read N- to C-terminus: Isoleucine--tRNA ligase (943 aa).

The short motif at 59-69 (PYANGQIHLGH) is the 'HIGH' region element. Residue glutamate 577 coordinates L-isoleucyl-5'-AMP. The 'KMSKS' region signature appears at 618–622 (KMSKS). Lysine 621 contributes to the ATP binding site. 4 residues coordinate Zn(2+): cysteine 906, cysteine 909, cysteine 926, and cysteine 929.

This sequence belongs to the class-I aminoacyl-tRNA synthetase family. IleS type 1 subfamily. Monomer. The cofactor is Zn(2+).

The protein localises to the cytoplasm. It carries out the reaction tRNA(Ile) + L-isoleucine + ATP = L-isoleucyl-tRNA(Ile) + AMP + diphosphate. Catalyzes the attachment of isoleucine to tRNA(Ile). As IleRS can inadvertently accommodate and process structurally similar amino acids such as valine, to avoid such errors it has two additional distinct tRNA(Ile)-dependent editing activities. One activity is designated as 'pretransfer' editing and involves the hydrolysis of activated Val-AMP. The other activity is designated 'posttransfer' editing and involves deacylation of mischarged Val-tRNA(Ile). This Xylella fastidiosa (strain M12) protein is Isoleucine--tRNA ligase.